Consider the following 230-residue polypeptide: MRLVIARCSVDYVGRLEAHLPSADRLLMVKADGSVSIHADDRAYKPLNWMTPPCSLVETPITDEDGEATGESLWVVENKKGEQLRITVEKIHSEQNFDLGEDPGLVKDGVEDHLQELLAEHITTLGDGYTLIRREYPTAIGPVDILCRNSDGETVAVEIKRRGGIDGVEQLTRYLELLNRDELLKPVHGVFAAQEIKPQAKTLAEDRGIKCVTLDYQALRGIESNELTLF.

It belongs to the NucS endonuclease family.

The protein localises to the cytoplasm. In terms of biological role, cleaves both 3' and 5' ssDNA extremities of branched DNA structures. The chain is Endonuclease NucS from Corynebacterium glutamicum (strain R).